The following is a 414-amino-acid chain: 2,3-bisphosphoglycerate-independent phosphoglycerate mutase (414 aa).

The protein belongs to the BPG-independent phosphoglycerate mutase family. A-PGAM subfamily.

It carries out the reaction (2R)-2-phosphoglycerate = (2R)-3-phosphoglycerate. The protein operates within carbohydrate degradation; glycolysis; pyruvate from D-glyceraldehyde 3-phosphate: step 3/5. Functionally, catalyzes the interconversion of 2-phosphoglycerate and 3-phosphoglycerate. The protein is 2,3-bisphosphoglycerate-independent phosphoglycerate mutase of Saccharolobus solfataricus (strain ATCC 35092 / DSM 1617 / JCM 11322 / P2) (Sulfolobus solfataricus).